The chain runs to 273 residues: Type II pantothenate kinase (273 aa).

Residue 8–15 (DAGGTLTK) participates in ATP binding. Glutamate 76 acts as the Proton acceptor in catalysis. ATP is bound by residues threonine 105, 127–131 (GGTIM), phenylalanine 143, and serine 230.

It belongs to the type II pantothenate kinase family. As to quaternary structure, homodimer.

It is found in the cytoplasm. The enzyme catalyses (R)-pantothenate + ATP = (R)-4'-phosphopantothenate + ADP + H(+). It functions in the pathway cofactor biosynthesis; coenzyme A biosynthesis; CoA from (R)-pantothenate: step 1/5. In terms of biological role, catalyzes the phosphorylation of pantothenate (Pan), the first step in CoA biosynthesis. This chain is Type II pantothenate kinase, found in Bacillus cereus (strain ATCC 14579 / DSM 31 / CCUG 7414 / JCM 2152 / NBRC 15305 / NCIMB 9373 / NCTC 2599 / NRRL B-3711).